We begin with the raw amino-acid sequence, 338 residues long: Beta-ketoacyl-[acyl-carrier-protein] synthase III 2 (338 aa).

Active-site residues include cysteine 119 and histidine 255. An ACP-binding region spans residues 256–260 (QANIR). Residue asparagine 285 is part of the active site.

The protein belongs to the thiolase-like superfamily. FabH family. As to quaternary structure, homodimer.

The protein resides in the cytoplasm. It carries out the reaction malonyl-[ACP] + acetyl-CoA + H(+) = 3-oxobutanoyl-[ACP] + CO2 + CoA. It functions in the pathway lipid metabolism; fatty acid biosynthesis. In terms of biological role, catalyzes the condensation reaction of fatty acid synthesis by the addition to an acyl acceptor of two carbons from malonyl-ACP. Catalyzes the first condensation reaction which initiates fatty acid synthesis and may therefore play a role in governing the total rate of fatty acid production. Possesses both acetoacetyl-ACP synthase and acetyl transacylase activities. Its substrate specificity determines the biosynthesis of branched-chain and/or straight-chain of fatty acids. The protein is Beta-ketoacyl-[acyl-carrier-protein] synthase III 2 of Deinococcus radiodurans (strain ATCC 13939 / DSM 20539 / JCM 16871 / CCUG 27074 / LMG 4051 / NBRC 15346 / NCIMB 9279 / VKM B-1422 / R1).